Reading from the N-terminus, the 199-residue chain is Molybdenum cofactor guanylyltransferase (199 aa).

Residues 12-14 (LAG), Lys-25, Asn-53, Asp-71, and Asp-101 contribute to the GTP site. Asp-101 contacts Mg(2+).

Belongs to the MobA family. Monomer. Mg(2+) is required as a cofactor.

It is found in the cytoplasm. It carries out the reaction Mo-molybdopterin + GTP + H(+) = Mo-molybdopterin guanine dinucleotide + diphosphate. In terms of biological role, transfers a GMP moiety from GTP to Mo-molybdopterin (Mo-MPT) cofactor (Moco or molybdenum cofactor) to form Mo-molybdopterin guanine dinucleotide (Mo-MGD) cofactor. The polypeptide is Molybdenum cofactor guanylyltransferase (Cupriavidus pinatubonensis (strain JMP 134 / LMG 1197) (Cupriavidus necator (strain JMP 134))).